We begin with the raw amino-acid sequence, 270 residues long: GTP cyclohydrolase FolE2 (270 aa).

This sequence belongs to the GTP cyclohydrolase IV family.

It catalyses the reaction GTP + H2O = 7,8-dihydroneopterin 3'-triphosphate + formate + H(+). It participates in cofactor biosynthesis; 7,8-dihydroneopterin triphosphate biosynthesis; 7,8-dihydroneopterin triphosphate from GTP: step 1/1. Functionally, converts GTP to 7,8-dihydroneopterin triphosphate. The sequence is that of GTP cyclohydrolase FolE2 from Cupriavidus pinatubonensis (strain JMP 134 / LMG 1197) (Cupriavidus necator (strain JMP 134)).